The following is a 506-amino-acid chain: RNA2 polyprotein (506 aa).

It belongs to the nepoviruses RNA2 polyprotein family. Post-translationally, specific enzymatic cleavages in vivo by the P1 encoded 3C-like protease yield mature proteins.

The protein resides in the host cell junction. It is found in the host plasmodesma. Its subcellular location is the virion. In terms of biological role, the movement protein is assembled into tubules that allow the transport of virions from cell to cell. This chain is RNA2 polyprotein, found in Beta vulgaris subsp. vulgaris (Beet).